Reading from the N-terminus, the 311-residue chain is Pyrimidine-specific ribonucleoside hydrolase RihA (311 aa).

The active site involves histidine 240.

Belongs to the IUNH family. RihA subfamily.

Hydrolyzes cytidine or uridine to ribose and cytosine or uracil, respectively. This Shigella boydii serotype 4 (strain Sb227) protein is Pyrimidine-specific ribonucleoside hydrolase RihA.